Reading from the N-terminus, the 223-residue chain is MESGSTPPTDKQIRENEQDGTGHQGKLLARPTSTRQQQQQQQQQPSHSVSQSVSQSPQTQDCLTIVANMSADQHLQALTKVVVNNLENQHDWTQVQIHIQDNLPRPLIYGLPPKRLYVHPDEQIDIIRAEKQLNQRVPQEPELEWVLPLHLAEKWSISDFAAVFDAITALPPGGESVNANEDAQWQLWRGPKRGKRILLATVQDDSTVTYYWMHNGLVKPRQN.

A disordered region spans residues 1–55 (MESGSTPPTDKQIRENEQDGTGHQGKLLARPTSTRQQQQQQQQQPSHSVSQSVSQ). Low complexity predominate over residues 30-55 (RPTSTRQQQQQQQQQPSHSVSQSVSQ).

The protein belongs to the SEN15 family. In terms of assembly, tRNA splicing endonuclease is a heterotetramer composed of tsp-2/sen2, tsp-1/sen15, tsp-4/sen34 and tsp-5/sen54. Interacts directly with tsp-4/sen34.

In terms of biological role, non-catalytic subunit of the tRNA-splicing endonuclease complex, a complex responsible for identification and cleavage of the splice sites in pre-tRNA. It cleaves pre-tRNA at the 5' and 3' splice sites to release the intron. The products are an intron and two tRNA half-molecules bearing 2',3' cyclic phosphate and 5'-OH termini. There are no conserved sequences at the splice sites, but the intron is invariably located at the same site in the gene, placing the splice sites an invariant distance from the constant structural features of the tRNA body. The sequence is that of Probable tRNA-splicing endonuclease subunit tsp-1 (tsp-1) from Neurospora crassa (strain ATCC 24698 / 74-OR23-1A / CBS 708.71 / DSM 1257 / FGSC 987).